We begin with the raw amino-acid sequence, 341 residues long: Heme A synthase (341 aa).

8 helical membrane-spanning segments follow: residues 7–27 (VTVW…IGGI), 92–112 (LFGR…AITK), 118–138 (MVAK…MGWF), 159–179 (LFLT…CAGV), 190–210 (FFTA…GALV), 253–273 (FLHR…PFWL), 280–300 (LFLA…VSVV), and 302–322 (IFLA…GVHM). Position 255 (H255) interacts with heme. H308 contributes to the heme binding site.

The protein belongs to the COX15/CtaA family. Type 2 subfamily. Interacts with CtaB. Heme b serves as cofactor.

The protein resides in the cell membrane. The enzyme catalyses Fe(II)-heme o + 2 A + H2O = Fe(II)-heme a + 2 AH2. Its pathway is porphyrin-containing compound metabolism; heme A biosynthesis; heme A from heme O: step 1/1. Its function is as follows. Catalyzes the conversion of heme O to heme A by two successive hydroxylations of the methyl group at C8. The first hydroxylation forms heme I, the second hydroxylation results in an unstable dihydroxymethyl group, which spontaneously dehydrates, resulting in the formyl group of heme A. This chain is Heme A synthase, found in Anaplasma marginale (strain St. Maries).